The following is a 471-amino-acid chain: Putative multidrug resistance protein MdtD (471 aa).

The next 13 membrane-spanning stretches (helical) occupy residues 12-32 (LWIV…VNTA), 49-69 (MIIV…GWLA), 77-97 (IFFT…QAST), 102-124 (VMAR…LTVM), 138-158 (FVTL…GVLV), 165-185 (WIFL…LCLM), 195-215 (FDLS…LALD), 220-240 (LGIS…ALLL), 263-283 (FSLG…LPFM), 286-306 (VFLQ…MIPM), 329-351 (VLVA…ALAG), 393-413 (LLSM…GLLL), and 431-451 (VFLY…LIFS).

The protein belongs to the major facilitator superfamily. TCR/Tet family.

It localises to the cell inner membrane. The polypeptide is Putative multidrug resistance protein MdtD (Klebsiella pneumoniae subsp. pneumoniae (strain ATCC 700721 / MGH 78578)).